Reading from the N-terminus, the 376-residue chain is Lateral eye opsin (376 aa).

Topologically, residues 1-46 (MANQLSYSSLGWPYQPNASVVDTMPKEMLYMIHEHWYAFPPMNPLW) are extracellular. Asparagine 17 carries N-linked (GlcNAc...) asparagine glycosylation. Residues 47–71 (YSILGVAMIILGIICVLGNGMVIYL) form a helical membrane-spanning segment. Residues 72-83 (MMTTKSLRTPTN) lie on the Cytoplasmic side of the membrane. A helical transmembrane segment spans residues 84–108 (LLVVNLAFSDFCMMAFMMPTMTSNC). Residues 109-123 (FAETWILGPFMCEVY) lie on the Extracellular side of the membrane. Cysteine 120 and cysteine 197 form a disulfide bridge. The chain crosses the membrane as a helical span at residues 124–143 (GMAGSLFGCASIWSMVMITL). At 144–162 (DRYNVIVRGMAAAPLTHKK) the chain is on the cytoplasmic side. A helical membrane pass occupies residues 163-186 (ATLLLLFVWIWSGGWTILPFFGWS). Topologically, residues 187 to 210 (RYVPEGNLTSCTVDYLTKDWSSAS) are extracellular. An N-linked (GlcNAc...) asparagine glycan is attached at asparagine 193. A helical transmembrane segment spans residues 211–238 (YVVIYGLAVYFLPLITMIYCYFFIVHAV). The Cytoplasmic portion of the chain corresponds to 239–274 (AEHEKQLREQAKKMNVASLRANADQQKQSAECRLAK). The chain crosses the membrane as a helical span at residues 275-298 (VAMMTVGLWFMAWTPYLIISWAGV). At 299–306 (FSSGTRLT) the chain is on the extracellular side. The chain crosses the membrane as a helical span at residues 307 to 331 (PLATIWGSVFAKANSCYNPIVYGIS). N6-(retinylidene)lysine is present on lysine 318. Residues 332–376 (HPRYKAALYQRFPSLACGSGESGSDVKSEASATTTMEEKPKIPEA) lie on the Cytoplasmic side of the membrane. The interval 349 to 376 (GSGESGSDVKSEASATTTMEEKPKIPEA) is disordered. A compositionally biased stretch (basic and acidic residues) spans 367–376 (MEEKPKIPEA).

It belongs to the G-protein coupled receptor 1 family. Opsin subfamily. In terms of processing, phosphorylated on some or all of the serine and threonine residues present in the C-terminal region. In terms of tissue distribution, lateral eye.

The protein resides in the membrane. Functionally, visual pigments are the light-absorbing molecules that mediate vision. They consist of an apoprotein, opsin, covalently linked to cis-retinal. The protein is Lateral eye opsin of Limulus polyphemus (Atlantic horseshoe crab).